The following is a 2130-amino-acid chain: Dedicator of cytokinesis protein 7 (2130 aa).

S30 is modified (phosphoserine). The tract at residues 137 to 175 (GFNPNTLDKQKERQKGLPRQVFESDEAPDGSSYQDEQDD) is disordered. S180 and S182 each carry phosphoserine. The stretch at 365-395 (FKEADATKNKEKLEKLKSQADQFCQRLGKYR) forms a coiled coil. N6-methyllysine is present on K381. Residue T450 is modified to Phosphothreonine. S452 bears the Phosphoserine mark. A C2 DOCK-type domain is found at 561-727 (RNLLYIYPQS…GVFNVEVVAV (167 aa)). Phosphoserine is present on residues S862, S864, S882, S888, S896, S900, and S905. A compositionally biased stretch (low complexity) spans 888 to 901 (SLNLNRSRSLSNSN). Residues 888–966 (SLNLNRSRSL…SCNRMSSHTE (79 aa)) are disordered. Phosphothreonine occurs at positions 907 and 909. 8 positions are modified to phosphoserine: S910, S929, S963, S1382, S1420, S1422, S1424, and S1428. The segment covering 942 to 966 (SNPSPSAESTQAMDRSCNRMSSHTE) has biased composition (polar residues). The DOCKER domain maps to 1668 to 2104 (KGYQTSPDLR…LQPLINRKIP (437 aa)). K1952 is modified (N6-acetyllysine). The stretch at 2076-2102 (DQKEYQRELERNYHRLKEALQPLINRK) forms a coiled coil. S2119 carries the phosphoserine modification.

It belongs to the DOCK family. As to quaternary structure, component of the DOCK7-induced septin displacement/DISP complex, at least composed of DOCK7, LRCH3 and MYO6. Interacts with TSC1. Interacts with nucleotide-free RAC1 and RAC3. Interacts with TACC3. Interacts with CRY1. Interacts with NOD2.

The protein localises to the cell projection. It is found in the axon. In terms of biological role, functions as a guanine nucleotide exchange factor (GEF), which activates Rac1 and Rac3 Rho small GTPases by exchanging bound GDP for free GTP. Does not have a GEF activity for CDC42. Required for STMN1 'Ser-15' phosphorylation during axon formation and consequently for neuronal polarization. As part of the DISP complex, may regulate the association of septins with actin and thereby regulate the actin cytoskeleton. Has a role in pigmentation. Involved in the regulation of cortical neurogenesis through the control of radial glial cells (RGCs) proliferation versus differentiation; negatively regulates the basal-to-apical interkinetic nuclear migration of RGCs by antagonizing the microtubule growth-promoting function of TACC3. This chain is Dedicator of cytokinesis protein 7 (Dock7), found in Mus musculus (Mouse).